Here is a 231-residue protein sequence, read N- to C-terminus: Ion-translocating oxidoreductase complex subunit E (231 aa).

7 helical membrane passes run G18–A38, L39–V59, I69–A89, N93–G113, S127–A147, L157–W177, and P182–L202.

Belongs to the NqrDE/RnfAE family. In terms of assembly, the complex is composed of six subunits: RnfA, RnfB, RnfC, RnfD, RnfE and RnfG.

The protein localises to the cell inner membrane. Part of a membrane-bound complex that couples electron transfer with translocation of ions across the membrane. The chain is Ion-translocating oxidoreductase complex subunit E from Shewanella frigidimarina (strain NCIMB 400).